Reading from the N-terminus, the 118-residue chain is UPF0342 protein LCK_01004 (118 aa).

It belongs to the UPF0342 family.

The chain is UPF0342 protein LCK_01004 from Leuconostoc citreum (strain KM20).